The primary structure comprises 308 residues: Energy-coupling factor transporter ATP-binding protein EcfA2 (308 aa).

Residues 3-263 (IEVKNISKVF…VDFLRENEME (261 aa)) enclose the ABC transporter domain. 40 to 47 (GPTGSGKT) contributes to the ATP binding site.

The protein belongs to the ABC transporter superfamily. Energy-coupling factor EcfA family. Forms a stable energy-coupling factor (ECF) transporter complex composed of 2 membrane-embedded substrate-binding proteins (S component), 2 ATP-binding proteins (A component) and 2 transmembrane proteins (T component).

The protein localises to the cell membrane. In terms of biological role, ATP-binding (A) component of a common energy-coupling factor (ECF) ABC-transporter complex. Unlike classic ABC transporters this ECF transporter provides the energy necessary to transport a number of different substrates. The sequence is that of Energy-coupling factor transporter ATP-binding protein EcfA2 from Mycoplasma mobile (strain ATCC 43663 / 163K / NCTC 11711) (Mesomycoplasma mobile).